The sequence spans 80 residues: Cytochrome c oxidase subunit 7B, mitochondrial (80 aa).

Residues 1–24 (MFPLAKNALSRLRVQSIQQAVARQ) constitute a mitochondrion transit peptide. Topologically, residues 25-32 (IHQKRAPD) are mitochondrial matrix. The chain crosses the membrane as a helical span at residues 33 to 59 (FHDKYGNAVLASGATFCVAVWVYMATQ). The Mitochondrial intermembrane portion of the chain corresponds to 60–80 (IGIEWNPSPVGRVTPKEWREQ).

It belongs to the cytochrome c oxidase VIIb family. Component of the cytochrome c oxidase (complex IV, CIV), a multisubunit enzyme composed of 14 subunits. The complex is composed of a catalytic core of 3 subunits MT-CO1, MT-CO2 and MT-CO3, encoded in the mitochondrial DNA, and 11 supernumerary subunits COX4I1 (or COX4I2), COX5A, COX5B, COX6A2 (or COX6A1), COX6B1 (or COX6B2), COX6C, COX7A1 (or COX7A2), COX7B, COX7C, COX8B and NDUFA4, which are encoded in the nuclear genome. The complex exists as a monomer or a dimer and forms supercomplexes (SCs) in the inner mitochondrial membrane with NADH-ubiquinone oxidoreductase (complex I, CI) and ubiquinol-cytochrome c oxidoreductase (cytochrome b-c1 complex, complex III, CIII), resulting in different assemblies (supercomplex SCI(1)III(2)IV(1) and megacomplex MCI(2)III(2)IV(2)).

Its subcellular location is the mitochondrion inner membrane. It functions in the pathway energy metabolism; oxidative phosphorylation. In terms of biological role, component of the cytochrome c oxidase, the last enzyme in the mitochondrial electron transport chain which drives oxidative phosphorylation. The respiratory chain contains 3 multisubunit complexes succinate dehydrogenase (complex II, CII), ubiquinol-cytochrome c oxidoreductase (cytochrome b-c1 complex, complex III, CIII) and cytochrome c oxidase (complex IV, CIV), that cooperate to transfer electrons derived from NADH and succinate to molecular oxygen, creating an electrochemical gradient over the inner membrane that drives transmembrane transport and the ATP synthase. Cytochrome c oxidase is the component of the respiratory chain that catalyzes the reduction of oxygen to water. Electrons originating from reduced cytochrome c in the intermembrane space (IMS) are transferred via the dinuclear copper A center (CU(A)) of subunit 2 and heme A of subunit 1 to the active site in subunit 1, a binuclear center (BNC) formed by heme A3 and copper B (CU(B)). The BNC reduces molecular oxygen to 2 water molecules using 4 electrons from cytochrome c in the IMS and 4 protons from the mitochondrial matrix. Plays a role in proper central nervous system (CNS) development in vertebrates. This chain is Cytochrome c oxidase subunit 7B, mitochondrial (COX7B), found in Bos taurus (Bovine).